We begin with the raw amino-acid sequence, 333 residues long: Ketoreductase sphI (333 aa).

Tyr167 serves as a coordination point for NADP(+).

This sequence belongs to the NAD(P)-dependent epimerase/dehydratase family. Dihydroflavonol-4-reductase subfamily.

Its function is as follows. Ketoreductase; part of the gene cluster that mediates the biosynthesis of sphingofungins, bioactive molecules acting as sphingolipid inhibitors via inhibiting serine palmitoyl transferase (SPT). Does not seem to be involved in any biosynthetic process leading to the production of sphingofungins, but might be connected to a regulation or resistance mechanism. The sequence is that of Ketoreductase sphI from Aspergillus fumigatus (strain CBS 144.89 / FGSC A1163 / CEA10) (Neosartorya fumigata).